A 207-amino-acid polypeptide reads, in one-letter code: Protein GET1 (207 aa).

At 1-4 (MPSL) the chain is on the lumenal side. A helical membrane pass occupies residues 5 to 24 (LISVLFLHIAIYIINTIAAS). Topologically, residues 25–110 (TIDSLLWLIY…FFDVAVKALR (86 aa)) are cytoplasmic. The stretch at 44 to 97 (IAREQHQMKLEVVQLKREMNATSSQDEFAKWAKLRRRHDKALEEYEVKNKQFSR) forms a coiled coil. A helical membrane pass occupies residues 111-131 (WAGTSGLIVFLQFWFSKTPIF). The Lumenal portion of the chain corresponds to 132–155 (TLPPSWIPWQVEWVLSFPRAPMGT). A helical transmembrane segment spans residues 156-172 (VSIQVWGGACAVVVALI). The Cytoplasmic portion of the chain corresponds to 173–207 (GEAIGATVRYLYASKDSMEAIKVGAGAVEKEKKRQ).

The protein belongs to the WRB/GET1 family. As to quaternary structure, interacts with GET3.

The protein resides in the endoplasmic reticulum membrane. Functionally, required for the post-translational delivery of tail-anchored (TA) proteins to the endoplasmic reticulum. Acts as a membrane receptor for soluble GET3, which recognizes and selectively binds the transmembrane domain of TA proteins in the cytosol. The polypeptide is Protein GET1 (Paracoccidioides brasiliensis (strain Pb18)).